Consider the following 268-residue polypeptide: Glutamate racemase (268 aa).

Substrate contacts are provided by residues 10 to 11 (DS) and 42 to 43 (YG). Cys73 serves as the catalytic Proton donor/acceptor. 74–75 (NT) serves as a coordination point for substrate. Cys184 serves as the catalytic Proton donor/acceptor. 185 to 186 (TH) contacts substrate.

This sequence belongs to the aspartate/glutamate racemases family.

The enzyme catalyses L-glutamate = D-glutamate. Its pathway is cell wall biogenesis; peptidoglycan biosynthesis. Its function is as follows. Provides the (R)-glutamate required for cell wall biosynthesis. In Carnobacterium sp. (strain St2), this protein is Glutamate racemase.